The following is a 66-amino-acid chain: Large ribosomal subunit protein bL33c (66 aa).

Belongs to the bacterial ribosomal protein bL33 family.

Its subcellular location is the plastid. The protein localises to the chloroplast. This is Large ribosomal subunit protein bL33c from Cryptomeria japonica (Japanese cedar).